Here is a 125-residue protein sequence, read N- to C-terminus: Large ribosomal subunit protein bL12 (125 aa).

Belongs to the bacterial ribosomal protein bL12 family. As to quaternary structure, homodimer. Part of the ribosomal stalk of the 50S ribosomal subunit. Forms a multimeric L10(L12)X complex, where L10 forms an elongated spine to which 2 to 4 L12 dimers bind in a sequential fashion. Binds GTP-bound translation factors.

In terms of biological role, forms part of the ribosomal stalk which helps the ribosome interact with GTP-bound translation factors. Is thus essential for accurate translation. The chain is Large ribosomal subunit protein bL12 from Campylobacter jejuni subsp. jejuni serotype O:2 (strain ATCC 700819 / NCTC 11168).